We begin with the raw amino-acid sequence, 394 residues long: 2-aminobenzenesulfonate 2,3-dioxygenase subunit alpha (394 aa).

Residues 43 to 154 (WKFVCHVSEI…TETYLGLVFV (112 aa)) form the Rieske domain. [2Fe-2S] cluster contacts are provided by cysteine 85, histidine 87, cysteine 105, and histidine 108. 2 residues coordinate Fe cation: histidine 209 and histidine 213.

This sequence belongs to the bacterial ring-hydroxylating dioxygenase alpha subunit family. As to quaternary structure, heterotetramer with a alpha2beta2 structure. Requires [2Fe-2S] cluster as cofactor. Fe cation is required as a cofactor.

It catalyses the reaction 2-aminobenzenesulfonate + NADH + O2 + 2 H(+) = 2,3-dihydroxybenzenesulfonate + NH4(+) + NAD(+). With respect to regulation, inhibited by o-phenanthroline. Alpha subunit of the oxygenase component of the 2-aminobenzenesulfonate 2,3-dioxygenase system (deaminating) (ABSDOS). Can use 2-aminobenzenesulfonate (ABS), benzenesulfonate (BS), 4-toluenesulfonate (TS), 2-nitrobenzenesulfonate, 3- and 4-aminobenzenesulfonates, 4-chloro- and 4-hydroxybenzenesulfonates and pyridine-3-sulfonate as substrates. No desulfonation of ABS to aminocatechol or aminophenol detected. This Alcaligenes sp protein is 2-aminobenzenesulfonate 2,3-dioxygenase subunit alpha.